A 322-amino-acid polypeptide reads, in one-letter code: p55-v-Fos-transforming protein (322 aa).

The tract at residues 69-95 (APGGRGQSIGRRGKVEQLSPEEEEKRR) is disordered. Residues 91-154 (EEKRRIRRER…EKLEFILAAH (64 aa)) enclose the bZIP domain. Residues 93–113 (KRRIRRERNKMAAAKCRNRRR) are basic motif. The interval 119 to 147 (LQAETDQLEEEKSALQAEIANLLKEKEKL) is leucine-zipper. The tract at residues 298-322 (AAHRKGSSSNEPSSDSLSSPTLLAL) is disordered. Over residues 304 to 316 (SSSNEPSSDSLSS) the composition is skewed to low complexity.

Belongs to the bZIP family. Fos subfamily.

The protein resides in the host nucleus. The chain is p55-v-Fos-transforming protein (V-FOS) from Galliformes.